The chain runs to 511 residues: MQHEIVIVLDFGGQYNQLIARRVRECGVYCEIWPYDTPLEKIIEKNPKGIIFTGGPSSVYEENAPVVDKKIFEIGVPILGICYGNQLIAYFLGGKVSTALFREYGKTHIKYNTNSPLFTGLPESSICWMSHTDFVEELPEGFEILASTENCAIAAFGSREKKIYGVQFHPEVVHTEFGQEIIKNFLFNICGCKGDWKTSSFIEERINEIRKIVGNQKVVCALSGGVDSSVAAVLVHKAIGKNLFCIFVDHGLLRKGEAEEVIKTFKGQFDMNVIKVDAKERFLKALCGVIDPERKRKIIGEEFIRVFEEEASKLGDVKFLVQGTIYPDVVESGVGKAATIKSHHNVGGLPEHIKFERIIEPLRELFKDEVRRVGVELGIPEKIVKRQPFPGPGLAIRIIGEVTEEKLEILREVDWIFRKEIEACGLDEEIWQYFAVLTDMRSVGVMGDERTYDYTVALRAVTSVDGMTADWARIPYDVLERVSNEIVNTVRKVNRVVYDITSKPPATIEWE.

The region spanning 5–195 (IVIVLDFGGQ…LFNICGCKGD (191 aa)) is the Glutamine amidotransferase type-1 domain. C82 functions as the Nucleophile in the catalytic mechanism. Active-site residues include H169 and E171. The GMPS ATP-PPase domain maps to 196 to 386 (WKTSSFIEER…LGIPEKIVKR (191 aa)). 223 to 229 (SGGVDSS) lines the ATP pocket.

As to quaternary structure, homodimer.

It catalyses the reaction XMP + L-glutamine + ATP + H2O = GMP + L-glutamate + AMP + diphosphate + 2 H(+). Its pathway is purine metabolism; GMP biosynthesis; GMP from XMP (L-Gln route): step 1/1. Functionally, catalyzes the synthesis of GMP from XMP. In Caldicellulosiruptor saccharolyticus (strain ATCC 43494 / DSM 8903 / Tp8T 6331), this protein is GMP synthase [glutamine-hydrolyzing].